We begin with the raw amino-acid sequence, 331 residues long: Protoheme IX farnesyltransferase (331 aa).

The next 9 helical transmembrane spans lie at 22–42, 50–70, 100–120, 147–167, 174–194, 220–240, 241–261, 273–293, and 307–327; these read LVKP…MWMA, FGVT…INMV, FAGI…NLLA, IVIG…AATG, WVMF…LAIL, ILLY…PLHV, LGSF…WKAV, ATSL…AMGL, and LASL…LGAM.

Belongs to the UbiA prenyltransferase family. Protoheme IX farnesyltransferase subfamily.

It is found in the cell inner membrane. The enzyme catalyses heme b + (2E,6E)-farnesyl diphosphate + H2O = Fe(II)-heme o + diphosphate. It participates in porphyrin-containing compound metabolism; heme O biosynthesis; heme O from protoheme: step 1/1. In terms of biological role, converts heme B (protoheme IX) to heme O by substitution of the vinyl group on carbon 2 of heme B porphyrin ring with a hydroxyethyl farnesyl side group. The protein is Protoheme IX farnesyltransferase of Synechococcus sp. (strain JA-3-3Ab) (Cyanobacteria bacterium Yellowstone A-Prime).